The primary structure comprises 130 residues: L-ectoine synthase (130 aa).

It belongs to the ectoine synthase family.

The catalysed reaction is (2S)-4-acetamido-2-aminobutanoate = L-ectoine + H2O. Its pathway is amine and polyamine biosynthesis; ectoine biosynthesis; L-ectoine from L-aspartate 4-semialdehyde: step 3/3. Its function is as follows. Catalyzes the circularization of gamma-N-acetyl-alpha,gamma-diaminobutyric acid (ADABA) to ectoine (1,4,5,6-tetrahydro-2-methyl-4-pyrimidine carboxylic acid), which is an excellent osmoprotectant. In Mycolicibacterium vanbaalenii (strain DSM 7251 / JCM 13017 / BCRC 16820 / KCTC 9966 / NRRL B-24157 / PYR-1) (Mycobacterium vanbaalenii), this protein is L-ectoine synthase.